A 226-amino-acid chain; its full sequence is Ribonuclease 3 (226 aa).

The region spanning isoleucine 6–aspartate 128 is the RNase III domain. Glutamate 41 lines the Mg(2+) pocket. Residue aspartate 45 is part of the active site. Mg(2+) is bound by residues aspartate 114 and glutamate 117. Glutamate 117 is an active-site residue. Positions aspartate 155–leucine 225 constitute a DRBM domain.

The protein belongs to the ribonuclease III family. Homodimer. Mg(2+) is required as a cofactor.

Its subcellular location is the cytoplasm. The enzyme catalyses Endonucleolytic cleavage to 5'-phosphomonoester.. Digests double-stranded RNA. Involved in the processing of primary rRNA transcript to yield the immediate precursors to the large and small rRNAs (23S and 16S). Processes some mRNAs, and tRNAs when they are encoded in the rRNA operon. Processes pre-crRNA and tracrRNA of type II CRISPR loci if present in the organism. This chain is Ribonuclease 3, found in Enterobacter sp. (strain 638).